Here is a 75-residue protein sequence, read N- to C-terminus: uncharacterized protein (75 aa).

Low complexity predominate over residues 1-14 (MNDNNDNNNNNKNI). Residues 1 to 30 (MNDNNDNNNNNKNIDNVDDDNDDNDKGKYK) are disordered.

This is an uncharacterized protein from Dictyostelium discoideum (Social amoeba).